The following is a 279-amino-acid chain: Large ribosomal subunit protein uL2 (279 aa).

2 disordered regions span residues 32–58 and 223–279; these read SLLT…GGGH and GVAM…RKRG. 2 stretches are compositionally biased toward basic residues: residues 40–58 and 269–279; these read KGGR…GGGH and VRRRYATRKRG.

The protein belongs to the universal ribosomal protein uL2 family. As to quaternary structure, part of the 50S ribosomal subunit. Forms a bridge to the 30S subunit in the 70S ribosome.

Functionally, one of the primary rRNA binding proteins. Required for association of the 30S and 50S subunits to form the 70S ribosome, for tRNA binding and peptide bond formation. It has been suggested to have peptidyltransferase activity; this is somewhat controversial. Makes several contacts with the 16S rRNA in the 70S ribosome. This chain is Large ribosomal subunit protein uL2, found in Salinispora tropica (strain ATCC BAA-916 / DSM 44818 / JCM 13857 / NBRC 105044 / CNB-440).